Reading from the N-terminus, the 503-residue chain is Plant-specific TFIIB-related protein 1 (503 aa).

A TFIIB-type zinc finger spans residues 1–33 (MKCPYCSSAQGRCTTTSSGRSITECSSCGRVME). Disordered regions lie at residues 328–366 (PEKAFPTTTISTTRSTTPRAVDPPEPSFVEKDKPSAKPI), 411–431 (NAMDYEKQQLDKQQQQQLGDK), 436–455 (IYLRDHNPFPSNPSPSTGIS), and 468–503 (GSSSNLPVIHPPKLPPGYAEIRGSGSRNADNPHGDF). Residues 333–346 (PTTTISTTRSTTPR) are compositionally biased toward low complexity. The span at 355–366 (FVEKDKPSAKPI) shows a compositional bias: basic and acidic residues.

Post-translationally, ubiquinated. Subsequent degradation by the proteasome pathway. Widely expressed.

It localises to the plastid. It is found in the chloroplast outer membrane. The protein resides in the nucleus. Plant-specific TFIIB-related protein that may be involved in an intracellular signaling pathway between plastids and the nucleus. May act as general transcription factor (GTF) of RNA polymerase I-dependent transcription and rRNA synthesis. Forms a ternary complex with TBP2 and the rDNA promoter region. The polypeptide is Plant-specific TFIIB-related protein 1 (Arabidopsis thaliana (Mouse-ear cress)).